Consider the following 495-residue polypeptide: Lysine--tRNA ligase (495 aa).

The Mg(2+) site is built by glutamate 406 and glutamate 413.

The protein belongs to the class-II aminoacyl-tRNA synthetase family. In terms of assembly, homodimer. The cofactor is Mg(2+).

Its subcellular location is the cytoplasm. It carries out the reaction tRNA(Lys) + L-lysine + ATP = L-lysyl-tRNA(Lys) + AMP + diphosphate. In Leuconostoc mesenteroides subsp. mesenteroides (strain ATCC 8293 / DSM 20343 / BCRC 11652 / CCM 1803 / JCM 6124 / NCDO 523 / NBRC 100496 / NCIMB 8023 / NCTC 12954 / NRRL B-1118 / 37Y), this protein is Lysine--tRNA ligase.